The sequence spans 738 residues: Polyribonucleotide nucleotidyltransferase (738 aa).

Mg(2+) contacts are provided by aspartate 514 and aspartate 520. Positions 580–639 (PRIITVKIPVDKIGEVIGPKGKMINQIQEDTGAEITIEDDGTIYIGAQVGSQAEAARATI) constitute a KH domain. The region spanning 651-723 (GERYLGTVVK…SRGKLSLIPV (73 aa)) is the S1 motif domain.

It belongs to the polyribonucleotide nucleotidyltransferase family. Requires Mg(2+) as cofactor.

It is found in the cytoplasm. The catalysed reaction is RNA(n+1) + phosphate = RNA(n) + a ribonucleoside 5'-diphosphate. Involved in mRNA degradation. Catalyzes the phosphorolysis of single-stranded polyribonucleotides processively in the 3'- to 5'-direction. The chain is Polyribonucleotide nucleotidyltransferase from Streptomyces avermitilis (strain ATCC 31267 / DSM 46492 / JCM 5070 / NBRC 14893 / NCIMB 12804 / NRRL 8165 / MA-4680).